We begin with the raw amino-acid sequence, 150 residues long: Large-conductance mechanosensitive channel (150 aa).

A run of 2 helical transmembrane segments spans residues 19 to 39 (VGIIIGGAFGAIVNTLVSDVL) and 85 to 105 (GIFLNALISFMIMAFAVFMLI).

This sequence belongs to the MscL family. In terms of assembly, homopentamer.

It is found in the cell inner membrane. Functionally, channel that opens in response to stretch forces in the membrane lipid bilayer. May participate in the regulation of osmotic pressure changes within the cell. This is Large-conductance mechanosensitive channel from Chlorobium limicola (strain DSM 245 / NBRC 103803 / 6330).